A 432-amino-acid chain; its full sequence is Adenylosuccinate synthetase (432 aa).

GTP contacts are provided by residues 12 to 18 and 40 to 42; these read GDEGKGK and GHT. Residue aspartate 13 is the Proton acceptor of the active site. Aspartate 13 and glycine 40 together coordinate Mg(2+). IMP contacts are provided by residues 13–16, 38–41, threonine 126, arginine 140, glutamine 219, threonine 234, and arginine 300; these read DEGK and NAGH. Residue histidine 41 is the Proton donor of the active site. 296–302 is a binding site for substrate; it reads STTGRPR. Residues arginine 302, 328-330, and 410-412 each bind GTP; these read KLD and STG.

Belongs to the adenylosuccinate synthetase family. In terms of assembly, homodimer. Mg(2+) serves as cofactor.

It is found in the cytoplasm. The enzyme catalyses IMP + L-aspartate + GTP = N(6)-(1,2-dicarboxyethyl)-AMP + GDP + phosphate + 2 H(+). Its pathway is purine metabolism; AMP biosynthesis via de novo pathway; AMP from IMP: step 1/2. Its function is as follows. Plays an important role in the de novo pathway of purine nucleotide biosynthesis. Catalyzes the first committed step in the biosynthesis of AMP from IMP. This is Adenylosuccinate synthetase from Aquifex aeolicus (strain VF5).